The following is a 242-amino-acid chain: N-alpha-acetyltransferase 60 (242 aa).

Residues 1-192 are Cytoplasmic-facing; that stretch reads MTEVVPSSAL…GGHPPWTILD (192 aa). Positions 13-182 constitute an N-acetyltransferase domain; sequence VSLRLLCHDD…DGFTYVLYIN (170 aa). Y38 lines the substrate pocket. K79 is subject to N6-acetyllysine; by autocatalysis. Y97 is an active-site residue. Residue L99 coordinates substrate. Acetyl-CoA is bound at residue 101–103; the sequence is LGV. An N6-acetyllysine; by autocatalysis mark is found at K105, K109, and K121. 109 to 114 contacts acetyl-CoA; that stretch reads KHGIGS. H138 is an active-site residue. Acetyl-CoA is bound by residues N143 and 150–153; that span reads YENR. Positions 162–173 are required for homodimerization; it reads PYYYSIRGVLKD. Y165 serves as a coordination point for substrate. An intramembrane region (helical) is located at residues 193–236; the sequence is YIQHLGSALANLSPCSIPHRIYRQAHSLLCSFLPWSSISTKGGI. At 237–242 the chain is on the cytoplasmic side; sequence EYSRTM.

The protein belongs to the acetyltransferase family. NAA60 subfamily. In terms of assembly, monomer and homodimer; monomer in presence of substrate and homodimer in its absence. In terms of processing, acetylated: autoacetylation is required for optimal acetyltransferase activity.

The protein localises to the golgi apparatus membrane. The catalysed reaction is N-terminal L-methionyl-[transmembrane protein] + acetyl-CoA = N-terminal N(alpha)-acetyl-L-methionyl-[transmembrane protein] + CoA + H(+). It catalyses the reaction L-lysyl-[protein] + acetyl-CoA = N(6)-acetyl-L-lysyl-[protein] + CoA + H(+). N-alpha-acetyltransferase that specifically mediates the acetylation of N-terminal residues of the transmembrane proteins, with a strong preference for N-termini facing the cytosol. Displays N-terminal acetyltransferase activity towards a range of N-terminal sequences including those starting with Met-Lys, Met-Val, Met-Ala and Met-Met. Required for normal chromosomal segregation during anaphase. May also show histone acetyltransferase activity; such results are however unclear in vivo and would require additional experimental evidences. This is N-alpha-acetyltransferase 60 (Naa60) from Mus musculus (Mouse).